Consider the following 226-residue polypeptide: Ribonuclease 3 (226 aa).

Residues 6 to 128 (INRLQRKLGY…LIGGIFLDSD (123 aa)) enclose the RNase III domain. Residue Glu-41 coordinates Mg(2+). The active site involves Asp-45. Residues Asp-114 and Glu-117 each contribute to the Mg(2+) site. Glu-117 is an active-site residue. One can recognise a DRBM domain in the interval 155 to 225 (DPKTRLQEFL…AEQALKKLEL (71 aa)).

It belongs to the ribonuclease III family. Homodimer. It depends on Mg(2+) as a cofactor.

It localises to the cytoplasm. It catalyses the reaction Endonucleolytic cleavage to 5'-phosphomonoester.. Digests double-stranded RNA. Involved in the processing of primary rRNA transcript to yield the immediate precursors to the large and small rRNAs (23S and 16S). Processes some mRNAs, and tRNAs when they are encoded in the rRNA operon. Processes pre-crRNA and tracrRNA of type II CRISPR loci if present in the organism. This chain is Ribonuclease 3, found in Pectobacterium carotovorum subsp. carotovorum (strain PC1).